The sequence spans 37 residues: Cytochrome b6-f complex subunit 5 (37 aa).

Residues 5 to 25 (LLSGIVLGLVPVTIAGLFVTA) traverse the membrane as a helical segment.

Belongs to the PetG family. The 4 large subunits of the cytochrome b6-f complex are cytochrome b6, subunit IV (17 kDa polypeptide, PetD), cytochrome f and the Rieske protein, while the 4 small subunits are PetG, PetL, PetM and PetN. The complex functions as a dimer.

It localises to the plastid. The protein localises to the chloroplast thylakoid membrane. Component of the cytochrome b6-f complex, which mediates electron transfer between photosystem II (PSII) and photosystem I (PSI), cyclic electron flow around PSI, and state transitions. PetG is required for either the stability or assembly of the cytochrome b6-f complex. This is Cytochrome b6-f complex subunit 5 from Chlorella vulgaris (Green alga).